The primary structure comprises 193 residues: Xanthine phosphoribosyltransferase (193 aa).

Residues L20 and N27 each contribute to the xanthine site. Residue 128 to 132 (ANGEA) coordinates 5-phospho-alpha-D-ribose 1-diphosphate. A xanthine-binding site is contributed by K156.

It belongs to the purine/pyrimidine phosphoribosyltransferase family. Xpt subfamily. In terms of assembly, homodimer.

It is found in the cytoplasm. The enzyme catalyses XMP + diphosphate = xanthine + 5-phospho-alpha-D-ribose 1-diphosphate. The protein operates within purine metabolism; XMP biosynthesis via salvage pathway; XMP from xanthine: step 1/1. Its function is as follows. Converts the preformed base xanthine, a product of nucleic acid breakdown, to xanthosine 5'-monophosphate (XMP), so it can be reused for RNA or DNA synthesis. The sequence is that of Xanthine phosphoribosyltransferase from Exiguobacterium sp. (strain ATCC BAA-1283 / AT1b).